A 423-amino-acid polypeptide reads, in one-letter code: Acetylornithine aminotransferase, mitochondrial (423 aa).

At Lys-276 the chain carries N6-(pyridoxal phosphate)lysine.

Belongs to the class-III pyridoxal-phosphate-dependent aminotransferase family. The cofactor is pyridoxal 5'-phosphate.

Its subcellular location is the mitochondrion matrix. The catalysed reaction is N(2)-acetyl-L-ornithine + 2-oxoglutarate = N-acetyl-L-glutamate 5-semialdehyde + L-glutamate. It functions in the pathway amino-acid biosynthesis; L-arginine biosynthesis; N(2)-acetyl-L-ornithine from L-glutamate: step 4/4. The sequence is that of Acetylornithine aminotransferase, mitochondrial (ARG8) from Eremothecium gossypii (strain ATCC 10895 / CBS 109.51 / FGSC 9923 / NRRL Y-1056) (Yeast).